A 438-amino-acid chain; its full sequence is MQVTVEKKEGIHCSLLIEVPANEIDSVVSKEINRTAKTIKMDGFRPGKVPAGMVKKKYGEQIRMEVISDLIPQKYSKAIQDEKLAVAGIEVELKENKEGQPLKFVANLELFPEFEVTGFEKIEVQKPVVELTDKEVKQMIENLRKQFATFSEVDKVVEKDDKVTIDFVGKKDGEAFEGGTANDIDVIIGSGQMIPGFEDGIIGMKKGEQKTITVTFPQDYQNKDLAEAETTFDITVKKIQQAELPEVNDEFVKKFGVKGGVDTFENEIKENMQRELKFILQRKVKDQVFKGLREIAEFETPKSLIKREIDAAKQNLLKQMGGAKGFDVNQLPDNLFEANAKQKVETSLILDSIMNLQEFKAEEAEVESLLDELVQAYEEPEKTKEQIKKNDKEIANLKALVIENKLTDWVLEQAKVTEKTEDFFEVIKENMQAQQAGF.

Positions 160-245 (DDKVTIDFVG…VKKIQQAELP (86 aa)) constitute a PPIase FKBP-type domain.

It belongs to the FKBP-type PPIase family. Tig subfamily.

The protein localises to the cytoplasm. It carries out the reaction [protein]-peptidylproline (omega=180) = [protein]-peptidylproline (omega=0). In terms of biological role, involved in protein export. Acts as a chaperone by maintaining the newly synthesized protein in an open conformation. Functions as a peptidyl-prolyl cis-trans isomerase. The chain is Trigger factor from Francisella tularensis subsp. mediasiatica (strain FSC147).